The primary structure comprises 83 residues: Cytochrome b559 subunit alpha (83 aa).

Residues 21-35 (VIHSITIPSLFIAGW) form a helical membrane-spanning segment. His-23 lines the heme pocket.

Belongs to the PsbE/PsbF family. As to quaternary structure, heterodimer of an alpha subunit and a beta subunit. PSII is composed of 1 copy each of membrane proteins PsbA, PsbB, PsbC, PsbD, PsbE, PsbF, PsbH, PsbI, PsbJ, PsbK, PsbL, PsbM, PsbT, PsbX, PsbY, PsbZ, Psb30/Ycf12, at least 3 peripheral proteins of the oxygen-evolving complex and a large number of cofactors. It forms dimeric complexes. Heme b is required as a cofactor.

The protein localises to the plastid. Its subcellular location is the chloroplast thylakoid membrane. Its function is as follows. This b-type cytochrome is tightly associated with the reaction center of photosystem II (PSII). PSII is a light-driven water:plastoquinone oxidoreductase that uses light energy to abstract electrons from H(2)O, generating O(2) and a proton gradient subsequently used for ATP formation. It consists of a core antenna complex that captures photons, and an electron transfer chain that converts photonic excitation into a charge separation. The sequence is that of Cytochrome b559 subunit alpha from Adiantum capillus-veneris (Maidenhair fern).